Here is a 2249-residue protein sequence, read N- to C-terminus: Outer membrane protein A (2249 aa).

Residues 1-28 (MANISPKLFKKAIQQGLKAALFTTSTAA) form the signal peptide. The stretch at 212–286 (IGNTNALATV…NGALSQVTGD (75 aa)) is one Type I 1 repeat. The 14 X approximate tandem repeats stretch occupies residues 212–1180 (IGNTNALATV…ALATVNVGAG (969 aa)). Type II repeat units lie at residues 287–358 (IGNT…VTGN) and 359–430 (VGNT…VTGD). The stretch at 431–505 (IGNTNALATV…NGALSQVTGN (75 aa)) is one Type I 2 repeat. The Type II 3 repeat unit spans residues 506-577 (IGNTNSLATI…FTGNSTVTGD (72 aa)). Residues 578 to 652 (IGNTNSLATI…NGALSQVTGD (75 aa)) form a Type I 3 repeat. A Type II 4 repeat occupies 653–724 (IGNTNSLATI…FTGNSTVTGD (72 aa)). Type I repeat units follow at residues 725-799 (IGNT…VTGD), 800-874 (IGNT…VTGD), and 875-949 (IGNT…VTGD). 3 Type II repeats span residues 950 to 1021 (IGNT…VTGN), 1022 to 1093 (VGNT…VTGN), and 1094 to 1165 (VGNT…VTGD). Residues 1166 to 1180 (IGNTNALATVNVGAG) form a Type I 7; truncated repeat. One can recognise an Autotransporter domain in the interval 1962–2249 (DMDAKFGAWI…QGSVKVRVNF (288 aa)).

The protein belongs to the rickettsiae OmpA/OmpB family. In terms of processing, glycosylated.

It is found in the periplasm. The protein resides in the secreted. Its subcellular location is the cell surface. The protein localises to the cell outer membrane. Functionally, elicits protective immunity. This chain is Outer membrane protein A (ompA), found in Rickettsia rickettsii.